The primary structure comprises 134 residues: Large ribosomal subunit protein bL20 (134 aa).

It belongs to the bacterial ribosomal protein bL20 family.

Its function is as follows. Binds directly to 23S ribosomal RNA and is necessary for the in vitro assembly process of the 50S ribosomal subunit. It is not involved in the protein synthesizing functions of that subunit. The polypeptide is Large ribosomal subunit protein bL20 (Sinorhizobium medicae (strain WSM419) (Ensifer medicae)).